A 200-amino-acid polypeptide reads, in one-letter code: 3-isopropylmalate dehydratase small subunit (200 aa).

The protein belongs to the LeuD family. LeuD type 1 subfamily. In terms of assembly, heterodimer of LeuC and LeuD.

The catalysed reaction is (2R,3S)-3-isopropylmalate = (2S)-2-isopropylmalate. The protein operates within amino-acid biosynthesis; L-leucine biosynthesis; L-leucine from 3-methyl-2-oxobutanoate: step 2/4. Its function is as follows. Catalyzes the isomerization between 2-isopropylmalate and 3-isopropylmalate, via the formation of 2-isopropylmaleate. The sequence is that of 3-isopropylmalate dehydratase small subunit from Yersinia pseudotuberculosis serotype I (strain IP32953).